The chain runs to 66 residues: Large ribosomal subunit protein bL33c (66 aa).

The protein belongs to the bacterial ribosomal protein bL33 family.

It is found in the plastid. Its subcellular location is the chloroplast. The polypeptide is Large ribosomal subunit protein bL33c (Helianthus annuus (Common sunflower)).